The primary structure comprises 255 residues: tRNA (guanine-N(7)-)-methyltransferase (255 aa).

The disordered stretch occupies residues 1 to 37 (MTAAASDPHNPRSSADDTASPRCESGQGSFFGRRKGH). S-adenosyl-L-methionine-binding residues include Glu-80, Glu-105, Asp-132, and Asp-154. The active site involves Asp-154. Substrate is bound by residues Lys-158 and Asp-190.

The protein belongs to the class I-like SAM-binding methyltransferase superfamily. TrmB family.

The catalysed reaction is guanosine(46) in tRNA + S-adenosyl-L-methionine = N(7)-methylguanosine(46) in tRNA + S-adenosyl-L-homocysteine. The protein operates within tRNA modification; N(7)-methylguanine-tRNA biosynthesis. Its function is as follows. Catalyzes the formation of N(7)-methylguanine at position 46 (m7G46) in tRNA. This Nitrobacter hamburgensis (strain DSM 10229 / NCIMB 13809 / X14) protein is tRNA (guanine-N(7)-)-methyltransferase.